Here is a 484-residue protein sequence, read N- to C-terminus: UDP-N-acetylmuramate--L-alanine ligase (484 aa).

125-131 (GTHGKTT) contributes to the ATP binding site.

It belongs to the MurCDEF family.

It is found in the cytoplasm. It carries out the reaction UDP-N-acetyl-alpha-D-muramate + L-alanine + ATP = UDP-N-acetyl-alpha-D-muramoyl-L-alanine + ADP + phosphate + H(+). It participates in cell wall biogenesis; peptidoglycan biosynthesis. Its function is as follows. Cell wall formation. The sequence is that of UDP-N-acetylmuramate--L-alanine ligase from Buchnera aphidicola subsp. Acyrthosiphon pisum (strain Tuc7).